The primary structure comprises 148 residues: Large ribosomal subunit protein bL27m (148 aa).

The N-terminal 30 residues, 1-30, are a transit peptide targeting the mitochondrion; that stretch reads MALAVLAWRTRTAVIALLSPPQAAALAVRY.

It belongs to the bacterial ribosomal protein bL27 family. As to quaternary structure, component of the mitochondrial ribosome large subunit (39S) which comprises a 16S rRNA and about 50 distinct proteins.

The protein resides in the mitochondrion. In Bos taurus (Bovine), this protein is Large ribosomal subunit protein bL27m (MRPL27).